Here is a 110-residue protein sequence, read N- to C-terminus: MKWLFKYLIRFYQKYLTILSFGSCRYYPTCSQYALWQLDNNTFFKAIYFTILRILKCNQLFDGGFDYPIIKLKKNQNINYNKIKIVYWYVPLKNGKYLVVKNREWKKNNE.

Belongs to the UPF0161 family.

The protein localises to the cell inner membrane. In terms of biological role, could be involved in insertion of integral membrane proteins into the membrane. This Aliarcobacter butzleri (strain RM4018) (Arcobacter butzleri) protein is Putative membrane protein insertion efficiency factor.